The following is a 186-amino-acid chain: Nuclear transcription factor Y subunit B-1 (186 aa).

Positions 1-24 (MAGNKKRGGRNMDQVKKAAVRSDG) are disordered. The DNA-binding element occupies 34 to 40 (LPMANLV). The segment at 61–72 (THDCAVEFVGFV) is subunit association domain (SAD). The segment at 123-142 (GGNRRVAPPPPAAATPLTPG) is disordered.

Belongs to the NFYB/HAP3 subunit family. In terms of assembly, heterotrimeric transcription factor composed of three components, NF-YA, NF-YB and NF-YC. NF-YB and NF-YC must interact and dimerize for NF-YA association and DNA binding. Interacts with MADS18. Forms a ternary complex with the MADS6-MADS18 heterodimer. As to expression, expressed in developing kernels.

It localises to the nucleus. Component of the NF-Y/HAP transcription factor complex. The NF-Y complex stimulates the transcription of various genes by recognizing and binding to a CCAAT motif in promoters. May act through association with MADS-box proteins. May regulate the expression of genes involved in flowering. The protein is Nuclear transcription factor Y subunit B-1 (NFYB1) of Oryza sativa subsp. japonica (Rice).